Here is a 413-residue protein sequence, read N- to C-terminus: Probable alpha-amylase 2 (413 aa).

Substrate is bound by residues Tyr74–Leu75 and Arg191–Arg196. Asp193 (nucleophile) is an active-site residue. The active-site Proton donor is Glu218. Substrate-binding positions include Trp220, Ser222, Gln239, Asp246, Lys280, Gly286–Trp288, His299, Gln305, Lys386, and Trp411.

This sequence belongs to the glycosyl hydrolase 13 family. Requires Ca(2+) as cofactor. Expressed in developing siliques.

It is found in the cytoplasm. The protein localises to the cytosol. It catalyses the reaction Endohydrolysis of (1-&gt;4)-alpha-D-glucosidic linkages in polysaccharides containing three or more (1-&gt;4)-alpha-linked D-glucose units.. Functionally, probable alpha-amylase that does not seem to be required for breakdown of transitory starch in leaves. The sequence is that of Probable alpha-amylase 2 (AMY2) from Arabidopsis thaliana (Mouse-ear cress).